Reading from the N-terminus, the 175-residue chain is Protein-export protein SecB (175 aa).

A disordered region spans residues 154 to 175 (QQGGNNNGSDSGIILPPGTTRQ).

This sequence belongs to the SecB family. Homotetramer, a dimer of dimers. One homotetramer interacts with 1 SecA dimer.

The protein localises to the cytoplasm. In terms of biological role, one of the proteins required for the normal export of preproteins out of the cell cytoplasm. It is a molecular chaperone that binds to a subset of precursor proteins, maintaining them in a translocation-competent state. It also specifically binds to its receptor SecA. The sequence is that of Protein-export protein SecB from Bordetella petrii (strain ATCC BAA-461 / DSM 12804 / CCUG 43448).